A 311-amino-acid polypeptide reads, in one-letter code: tRNA dimethylallyltransferase (311 aa).

An ATP-binding site is contributed by 10–17 (GPTAVGKS). Residue 12–17 (TAVGKS) participates in substrate binding. An interaction with substrate tRNA region spans residues 35-38 (DSMQ).

Belongs to the IPP transferase family. In terms of assembly, monomer. Mg(2+) is required as a cofactor.

The catalysed reaction is adenosine(37) in tRNA + dimethylallyl diphosphate = N(6)-dimethylallyladenosine(37) in tRNA + diphosphate. Catalyzes the transfer of a dimethylallyl group onto the adenine at position 37 in tRNAs that read codons beginning with uridine, leading to the formation of N6-(dimethylallyl)adenosine (i(6)A). This is tRNA dimethylallyltransferase from Carboxydothermus hydrogenoformans (strain ATCC BAA-161 / DSM 6008 / Z-2901).